Reading from the N-terminus, the 700-residue chain is Lutropin-choriogonadotropic hormone receptor (700 aa).

A signal peptide spans 1-26 (MGRRVPALRQLLVLAMLVLKQSQLHS). Over 27 to 362 (PELSGSRCPE…AFNPCEDIMG (336 aa)) the chain is Extracellular. The stretch at 52-75 (RAGLARLSLTYLPVKVIPSQAFRG) is one LRR 1 repeat. The N-linked (GlcNAc...) asparagine glycan is linked to Asn-103. LRR repeat units follow at residues 126-150 (LPRL…KISS), 176-200 (MNNE…AFNG), and 225-248 (ATGP…GLES). Residues Asn-178 and Asn-199 are each glycosylated (N-linked (GlcNAc...) asparagine). N-linked (GlcNAc...) asparagine glycosylation is found at Asn-295, Asn-303, and Asn-317. Tyr-335 is subject to Sulfotyrosine. The chain crosses the membrane as a helical span at residues 363–390 (YAFLRVLIWLINILAIFGNLTVLFVLLT). Over 391–399 (SRYKLTVPR) the chain is Cytoplasmic. Residues 400–422 (FLMCNLSFADFCMGLYLLLIASV) form a helical membrane-spanning segment. Over 423 to 443 (DSQTKGQYYNHAIDWQTGSGC) the chain is Extracellular. An intrachain disulfide couples Cys-443 to Cys-518. A helical membrane pass occupies residues 444-466 (SAAGFFTVFASELSVYTLTVITL). Residues 467–486 (ERWHTITYAVQLDQKLRLRH) lie on the Cytoplasmic side of the membrane. Residues 487–509 (AIPIMLGGWIFSTLMATLPLVGV) form a helical membrane-spanning segment. Residues 510–529 (SSYMKVSICLPMDVESTLSQ) lie on the Extracellular side of the membrane. A helical membrane pass occupies residues 530-551 (VYILSILLLNAVAFVVICACYV). Residues 552–574 (RIYFAVQNPELTAPNKDTKIAKK) are Cytoplasmic-facing. The helical transmembrane segment at 575-598 (MAILIFTDFTCMAPISFFAISAAF) threads the bilayer. Topologically, residues 599-609 (KVPLITVTNSK) are extracellular. Residues 610-631 (VLLVLFYPVNSCANPFLYAVFT) form a helical membrane-spanning segment. The Cytoplasmic portion of the chain corresponds to 632 to 700 (KAFQRDFFLL…QPTPPRVLIQ (69 aa)). Residues Cys-647 and Cys-648 are each lipidated (S-palmitoyl cysteine).

Belongs to the G-protein coupled receptor 1 family. FSH/LSH/TSH subfamily. In terms of processing, sulfated.

Its subcellular location is the cell membrane. In terms of biological role, receptor for lutropin-choriogonadotropic hormone. The activity of this receptor is mediated by G proteins which activate adenylate cyclase. This Mus musculus (Mouse) protein is Lutropin-choriogonadotropic hormone receptor (Lhcgr).